The primary structure comprises 56 residues: uncharacterized protein (56 aa).

A helical membrane pass occupies residues 12-32 (GITLFPYFAILILILAILVVG). The tract at residues 19–31 (FAILILILAILVV) is hydrophobic.

The protein localises to the membrane. This is an uncharacterized protein from Chenopodium amaranticolor (Quinoa).